Reading from the N-terminus, the 347-residue chain is UDP-rhamnose/UDP-galactose transporter 1 (347 aa).

Transmembrane regions (helical) follow at residues 11–31 (AVSD…IIMA), 43–63 (FGFA…VGMV), 80–100 (LLWF…SLML), 103–123 (VGFY…LEWI), 132–152 (EVKA…VTDV), 159–179 (FICA…IGSL), 195–215 (APIQ…LLSG), 223–243 (MTYG…FCNI), 256–276 (SFQV…WLLF), and 285–305 (IAGM…VDIE).

This sequence belongs to the TPT transporter family. TPT (TC 2.A.7.9) subfamily. Widely expressed in the whole plant.

The protein resides in the golgi apparatus membrane. In terms of biological role, nucleotide-sugar transporter that transports UDP-rhamnose or UDP-galactose and UMP in a strict counter-exchange mode. The sequence is that of UDP-rhamnose/UDP-galactose transporter 1 from Arabidopsis thaliana (Mouse-ear cress).